We begin with the raw amino-acid sequence, 265 residues long: Glutamate racemase (265 aa).

Residues 13–14 (DS) and 45–46 (YG) each bind substrate. C77 serves as the catalytic Proton donor/acceptor. Residue 78–79 (NT) participates in substrate binding. C185 functions as the Proton donor/acceptor in the catalytic mechanism. 186–187 (TH) is a substrate binding site.

It belongs to the aspartate/glutamate racemases family.

The catalysed reaction is L-glutamate = D-glutamate. Its pathway is cell wall biogenesis; peptidoglycan biosynthesis. In terms of biological role, provides the (R)-glutamate required for cell wall biosynthesis. The protein is Glutamate racemase of Vibrio cholerae serotype O1 (strain ATCC 39315 / El Tor Inaba N16961).